Reading from the N-terminus, the 230-residue chain is E3 ubiquitin-protein ligase RNF114 (230 aa).

The RING-type zinc-finger motif lies at 31–70; sequence CPVCLEVYEKPVQVPCGHVFCSACLQECLKPKKPVCGVCR. Residues Cys93 and Cys96 each coordinate Zn(2+). The segment at 93-112 adopts a C2HC RNF-type zinc-finger fold; sequence CHGCRKNFFLSKIRAHVATC. Lys104 bears the N6-acetyllysine mark. Zn(2+) is bound by residues His108 and Cys112. Position 114 is an N6-acetyllysine (Lys114).

In terms of assembly, interacts with XAF1, the interaction increases XAF1 stability and proapoptotic effects, and may regulate IFN signaling. In terms of processing, autoubiquitinated. Polyubiquitinated in the presence of E2 enzymes UBE2D1, UBE2D2 and UBE2D3, but only monoubiquitinated in the presence of UBE2E1.

It localises to the cytoplasm. Its subcellular location is the nucleus. It catalyses the reaction S-ubiquitinyl-[E2 ubiquitin-conjugating enzyme]-L-cysteine + [acceptor protein]-L-lysine = [E2 ubiquitin-conjugating enzyme]-L-cysteine + N(6)-ubiquitinyl-[acceptor protein]-L-lysine.. Its pathway is protein modification; protein ubiquitination. Its function is as follows. E3 ubiquitin-protein ligase that promotes the ubiquitination of various substrates. In turn, participates in the regulation of many biological processes including cell cycle, apoptosis, osteoclastogenesis as well as innate or adaptive immunity. Acts as negative regulator of NF-kappa-B-dependent transcription by promoting the ubiquitination and stabilization of the NF-kappa-B inhibitor TNFAIP3. May promote the ubiquitination of TRAF6 as well. Also acts as a negative regulator of T-cell activation. Inhibits cellular dsRNA responses and interferon production by targeting MAVS component for proteasomal degradation. Ubiquitinates the CDK inhibitor CDKN1A leading to its degradationand probably also CDKN1B and CDKN1C. This activity stimulates cell cycle G1-to-S phase transition and suppresses cellular senescence. May play a role in spermatogenesis. The sequence is that of E3 ubiquitin-protein ligase RNF114 (RNF114) from Bos taurus (Bovine).